A 100-amino-acid polypeptide reads, in one-letter code: NADH-quinone oxidoreductase subunit K (100 aa).

3 consecutive transmembrane segments (helical) span residues 4–24 (LQHG…CLVL), 28–48 (LLFM…AFVV), and 60–80 (IMYI…LALL).

The protein belongs to the complex I subunit 4L family. As to quaternary structure, NDH-1 is composed of 13 different subunits. Subunits NuoA, H, J, K, L, M, N constitute the membrane sector of the complex.

Its subcellular location is the cell inner membrane. The enzyme catalyses a quinone + NADH + 5 H(+)(in) = a quinol + NAD(+) + 4 H(+)(out). In terms of biological role, NDH-1 shuttles electrons from NADH, via FMN and iron-sulfur (Fe-S) centers, to quinones in the respiratory chain. The immediate electron acceptor for the enzyme in this species is believed to be ubiquinone. Couples the redox reaction to proton translocation (for every two electrons transferred, four hydrogen ions are translocated across the cytoplasmic membrane), and thus conserves the redox energy in a proton gradient. In Proteus mirabilis (strain HI4320), this protein is NADH-quinone oxidoreductase subunit K.